Reading from the N-terminus, the 581-residue chain is Fibrous sheath-interacting protein 1 (581 aa).

The segment at Met1–Ser77 is disordered. The span at Pro14–Ser30 shows a compositional bias: polar residues. Basic and acidic residues predominate over residues Gly52–Ser77. Ser87 carries the post-translational modification Phosphoserine. A coiled-coil region spans residues Ser103 to Glu153. Disordered regions lie at residues Ser338 to Arg370 and Asp553 to Pro581.

It belongs to the FSIP1 family.

The protein is Fibrous sheath-interacting protein 1 (FSIP1) of Macaca fascicularis (Crab-eating macaque).